The following is a 454-amino-acid chain: MINILEVNETNNMIEQEKLDVRTITLGISLLDCCDASLDTLNQKIYAKITRLARNLVSTGREIELEYGIPIVNKRISVTPIALIAGSACQSPEDFVSIAQTLDKAAADMGVNFIGGYSAIVSKGMTWTDELLIRSIPHALSATERVCSSVNIGSTKTGINMDAVRLMGQIIKETAEATQEQNSLGCAKLVVFCNAPDDNPFMAGAFHGISEADAVIHVGVSGPGVVKHALESVRGKDFEVLCETVKKTAFKVTRVGQLVAQVASERLGVPFGIVDLSLAPTPSVGDSVAEILEEMGLESVGAPGTTAALALLNDQVKKGGVMASSFVGGLSGAFIPVSEDQGMIDAVIRGSLTIEKLEAMTCVCSVGLDMIAIPGSTPASTISGIIADEAAIGMINQKTTAVRLIPVIGKDVGDMVEFGGLLGHAPVQQVNTFDCSKFINRGGRIPAPIHSFRN.

The protein belongs to the UPF0210 family.

The chain is UPF0210 protein Mhun_2657 from Methanospirillum hungatei JF-1 (strain ATCC 27890 / DSM 864 / NBRC 100397 / JF-1).